Reading from the N-terminus, the 92-residue chain is Non-specific lipid-transfer protein B (92 aa).

4 cysteine pairs are disulfide-bonded: Cys-3–Cys-51, Cys-13–Cys-28, Cys-29–Cys-74, and Cys-49–Cys-88.

This sequence belongs to the plant LTP family.

Its function is as follows. Plant non-specific lipid-transfer proteins transfer phospholipids as well as galactolipids across membranes. May play a role in wax or cutin deposition in the cell walls of expanding epidermal cells and certain secretory tissues. This Ricinus communis (Castor bean) protein is Non-specific lipid-transfer protein B.